Here is a 59-residue protein sequence, read N- to C-terminus: Ribosome biogenesis protein Nop10 (59 aa).

This sequence belongs to the NOP10 family.

In terms of biological role, involved in ribosome biogenesis; more specifically in 18S rRNA pseudouridylation and in cleavage of pre-rRNA. In Thermococcus kodakarensis (strain ATCC BAA-918 / JCM 12380 / KOD1) (Pyrococcus kodakaraensis (strain KOD1)), this protein is Ribosome biogenesis protein Nop10.